The following is a 100-amino-acid chain: Glutamyl-tRNA(Gln) amidotransferase subunit C (100 aa).

It belongs to the GatC family. As to quaternary structure, heterotrimer of A, B and C subunits.

It carries out the reaction L-glutamyl-tRNA(Gln) + L-glutamine + ATP + H2O = L-glutaminyl-tRNA(Gln) + L-glutamate + ADP + phosphate + H(+). It catalyses the reaction L-aspartyl-tRNA(Asn) + L-glutamine + ATP + H2O = L-asparaginyl-tRNA(Asn) + L-glutamate + ADP + phosphate + 2 H(+). In terms of biological role, allows the formation of correctly charged Asn-tRNA(Asn) or Gln-tRNA(Gln) through the transamidation of misacylated Asp-tRNA(Asn) or Glu-tRNA(Gln) in organisms which lack either or both of asparaginyl-tRNA or glutaminyl-tRNA synthetases. The reaction takes place in the presence of glutamine and ATP through an activated phospho-Asp-tRNA(Asn) or phospho-Glu-tRNA(Gln). The chain is Glutamyl-tRNA(Gln) amidotransferase subunit C from Streptococcus pyogenes serotype M1.